An 89-amino-acid chain; its full sequence is Small ribosomal subunit protein bS18 (89 aa).

This sequence belongs to the bacterial ribosomal protein bS18 family. As to quaternary structure, part of the 30S ribosomal subunit. Forms a tight heterodimer with protein bS6.

Binds as a heterodimer with protein bS6 to the central domain of the 16S rRNA, where it helps stabilize the platform of the 30S subunit. The polypeptide is Small ribosomal subunit protein bS18 (Phocaeicola vulgatus (strain ATCC 8482 / DSM 1447 / JCM 5826 / CCUG 4940 / NBRC 14291 / NCTC 11154) (Bacteroides vulgatus)).